Reading from the N-terminus, the 344-residue chain is Aspartate-semialdehyde dehydrogenase (344 aa).

NADP(+) is bound by residues 10-13 and 38-39; these read TGQV and RS. R101 provides a ligand contact to phosphate. C131 serves as the catalytic Acyl-thioester intermediate. Residue Q158 participates in substrate binding. 161-162 contributes to the NADP(+) binding site; sequence SG. K228 serves as a coordination point for phosphate. R250 provides a ligand contact to substrate. Residue H257 is the Proton acceptor of the active site. An NADP(+)-binding site is contributed by N326.

Belongs to the aspartate-semialdehyde dehydrogenase family. As to quaternary structure, homodimer.

The enzyme catalyses L-aspartate 4-semialdehyde + phosphate + NADP(+) = 4-phospho-L-aspartate + NADPH + H(+). It functions in the pathway amino-acid biosynthesis; L-lysine biosynthesis via DAP pathway; (S)-tetrahydrodipicolinate from L-aspartate: step 2/4. Its pathway is amino-acid biosynthesis; L-methionine biosynthesis via de novo pathway; L-homoserine from L-aspartate: step 2/3. The protein operates within amino-acid biosynthesis; L-threonine biosynthesis; L-threonine from L-aspartate: step 2/5. Its function is as follows. Catalyzes the NADPH-dependent formation of L-aspartate-semialdehyde (L-ASA) by the reductive dephosphorylation of L-aspartyl-4-phosphate. The chain is Aspartate-semialdehyde dehydrogenase from Corynebacterium glutamicum (strain ATCC 13032 / DSM 20300 / JCM 1318 / BCRC 11384 / CCUG 27702 / LMG 3730 / NBRC 12168 / NCIMB 10025 / NRRL B-2784 / 534).